The sequence spans 273 residues: Patr class II histocompatibility antigen, DO beta chain (273 aa).

The signal sequence occupies residues 1-26; sequence MGSGWVPWVVALLVNLTRLDSSMTQG. The interval 27 to 120 is beta-1; the sequence is TDSPEDFVIQ…LGAPFTVGRK (94 aa). Residues 27–224 lie on the Extracellular side of the membrane; that stretch reads TDSPEDFVIQ…RAQSEYSWKK (198 aa). Intrachain disulfides connect Cys41–Cys105 and Cys143–Cys199. Asn45 carries an N-linked (GlcNAc...) asparagine glycan. Residues 121–214 form a beta-2 region; that stretch reads VQPEVTVYPE…SLLSPVSVEW (94 aa). One can recognise an Ig-like C1-type domain in the interval 123-213; it reads PEVTVYPERT…SSLLSPVSVE (91 aa). The segment at 215–224 is connecting peptide; the sequence is RAQSEYSWKK. A helical transmembrane segment spans residues 225–245; it reads MLSGIAAFLLGLIFLLVGIVI. Over 246–273 the chain is Cytoplasmic; sequence QLRAQKGYVRTQMSGNEVSRAVLLPQSC.

This sequence belongs to the MHC class II family. As to quaternary structure, heterodimer of an alpha chain (DOA) and a beta chain (DOB). Forms a heterotetrameric complex with an HLA-DM molecule during intracellular transport in endosomal/lysosomal compartments in B-cells.

It is found in the endosome membrane. Its subcellular location is the lysosome membrane. Functionally, important modulator in the HLA class II restricted antigen presentation pathway by interaction with the HLA-DM molecule in B-cells. Modifies peptide exchange activity of HLA-DM. The protein is Patr class II histocompatibility antigen, DO beta chain (Patr-DOB) of Pan troglodytes (Chimpanzee).